We begin with the raw amino-acid sequence, 188 residues long: MTIKSDKWIRRMAREQGMIEPFVERQVRTEGSERLISYGVSSYGYDVRCADEFKVFTNIHSATVDPKNFDERSFVDVKGAVCIIPPNSFALARTVEYFRIPRNVLTICLGKSTYARCGIIVNVTPLEPEWEGHVTLEFSNTTTLPAKIYANEGVAQMLFLESDEPCEVSYKDRGGKYQGQTGVTLPKT.

DCTP is bound by residues 111 to 116, 135 to 137, Q156, Y170, and Q180; these read KSTYAR and TLE. E137 serves as the catalytic Proton donor/acceptor.

This sequence belongs to the dCTP deaminase family. As to quaternary structure, homotrimer.

It carries out the reaction dCTP + H2O + H(+) = dUTP + NH4(+). It participates in pyrimidine metabolism; dUMP biosynthesis; dUMP from dCTP (dUTP route): step 1/2. In terms of biological role, catalyzes the deamination of dCTP to dUTP. The polypeptide is dCTP deaminase (Azotobacter vinelandii (strain DJ / ATCC BAA-1303)).